A 168-amino-acid chain; its full sequence is MNISNKIGIYPGTFDPITFGHLDIIKRACKLVDKLIIGVAENVNKHTNFDIRLRTSMAKNEVKGAGIDADIISFNGLLVKFAKEQNASVIIRGLRAVSDFDYEFQMSWVNYKLFPEIETIFLPASEDTQFISSSFVKEIARLGGDVSNFVSKSVQSELINLNRVENGE.

Substrate is bound at residue Thr-13. ATP contacts are provided by residues 13-14 (TF) and His-21. Lys-45, Leu-78, and Arg-92 together coordinate substrate. ATP contacts are provided by residues 93–95 (GLR), Glu-103, and 128–134 (TQFISSS).

The protein belongs to the bacterial CoaD family. Homohexamer. Mg(2+) serves as cofactor.

The protein localises to the cytoplasm. It carries out the reaction (R)-4'-phosphopantetheine + ATP + H(+) = 3'-dephospho-CoA + diphosphate. The protein operates within cofactor biosynthesis; coenzyme A biosynthesis; CoA from (R)-pantothenate: step 4/5. Reversibly transfers an adenylyl group from ATP to 4'-phosphopantetheine, yielding dephospho-CoA (dPCoA) and pyrophosphate. This chain is Phosphopantetheine adenylyltransferase, found in Wolbachia pipientis subsp. Culex pipiens (strain wPip).